The following is a 591-amino-acid chain: Heterogeneous nuclear ribonucleoprotein L-like (591 aa).

Positions 1–120 (MSSSSSSSPK…STEGGGSHHK (120 aa)) are disordered. The segment covering 20 to 31 (FESQAKRLKTEE) has biased composition (basic and acidic residues). Lys-28 is covalently cross-linked (Glycyl lysine isopeptide (Lys-Gly) (interchain with G-Cter in SUMO2)). Ser-37 bears the Phosphoserine mark. Thr-48 carries the phosphothreonine modification. Residues 57 to 73 (SGGGDGGDGDGGSGGGG) show a composition bias toward gly residues. Residues 74 to 91 (DGEEGEGGEEGDEGDGDE) are compositionally biased toward acidic residues. Gly residues predominate over residues 92-105 (GGSGGDEGGSGGGP). Ser-107, Ser-117, and Ser-124 each carry phosphoserine. 3 RRM domains span residues 125 to 199 (PVVH…YSTS), 215 to 293 (NKVL…YARP), and 384 to 458 (SVVM…VSKQ). Residue Lys-540 forms a Glycyl lysine isopeptide (Lys-Gly) (interchain with G-Cter in SUMO2) linkage.

In terms of assembly, interacts with HNRNPL.

RNA-binding protein that functions as a regulator of alternative splicing for multiple target mRNAs, including PTPRC/CD45 and STAT5A. Required for alternative splicing of PTPRC. This Mus musculus (Mouse) protein is Heterogeneous nuclear ribonucleoprotein L-like (Hnrnpll).